The primary structure comprises 489 residues: Probable transporter MCH1 (489 aa).

12 consecutive transmembrane segments (helical) span residues 34-54 (ISLI…FTPV), 68-88 (IIGS…GYLA), 94-114 (VLLS…AATV), 124-144 (LAIS…TALL), 156-175 (LTIS…GSRV), 196-216 (FSFL…VVSI), 262-282 (ISTY…EMYI), 302-324 (VAIH…DFLV), 335-355 (LLSI…STFV), 359-379 (YYII…LYPT), 403-423 (IGST…CGVF), and 463-483 (SLII…ILRI).

The protein belongs to the major facilitator superfamily.

The protein localises to the vacuole membrane. Probable transporter. The sequence is that of Probable transporter MCH1 (MCH1) from Wickerhamomyces anomalus (Yeast).